Reading from the N-terminus, the 263-residue chain is Small ribosomal subunit protein uS3 (263 aa).

The 69-residue stretch at 40–108 (IRNYLFKKFH…HIKVDVDVLE (69 aa)) folds into the KH type-2 domain. The disordered stretch occupies residues 224–263 (KPKGSEANHQRRNSNKSKDYRDNKNKQFNKNHQNQQPAKE). Over residues 239–248 (KSKDYRDNKN) the composition is skewed to basic and acidic residues. A compositionally biased stretch (low complexity) spans 249 to 263 (KQFNKNHQNQQPAKE).

Belongs to the universal ribosomal protein uS3 family. In terms of assembly, part of the 30S ribosomal subunit. Forms a tight complex with proteins S10 and S14.

In terms of biological role, binds the lower part of the 30S subunit head. Binds mRNA in the 70S ribosome, positioning it for translation. The chain is Small ribosomal subunit protein uS3 from Mycoplasmoides gallisepticum (strain R(low / passage 15 / clone 2)) (Mycoplasma gallisepticum).